A 603-amino-acid chain; its full sequence is Elongation factor 4 (603 aa).

The tr-type G domain occupies 2–184; the sequence is NHIRNFSIIA…AVIARVPPPK (183 aa). GTP is bound by residues 14 to 19 and 131 to 134; these read DHGKST and NKMD.

This sequence belongs to the TRAFAC class translation factor GTPase superfamily. Classic translation factor GTPase family. LepA subfamily.

It is found in the cell inner membrane. The enzyme catalyses GTP + H2O = GDP + phosphate + H(+). In terms of biological role, required for accurate and efficient protein synthesis under certain stress conditions. May act as a fidelity factor of the translation reaction, by catalyzing a one-codon backward translocation of tRNAs on improperly translocated ribosomes. Back-translocation proceeds from a post-translocation (POST) complex to a pre-translocation (PRE) complex, thus giving elongation factor G a second chance to translocate the tRNAs correctly. Binds to ribosomes in a GTP-dependent manner. The chain is Elongation factor 4 from Polaromonas sp. (strain JS666 / ATCC BAA-500).